The primary structure comprises 331 residues: Eukaryotic translation initiation factor 2 subunit 2 (331 aa).

Disordered stretches follow at residues Met-1–Phe-75 and Ala-97–Met-120. Ser-2 is subject to N-acetylserine. 2 positions are modified to phosphoserine: Ser-2 and Ser-13. Positions Ser-13–Pro-22 are enriched in basic residues. Thr-36 bears the Phosphothreonine mark. Basic and acidic residues predominate over residues Glu-40 to Glu-51. Ser-67 carries the phosphoserine modification. A Glycyl lysine isopeptide (Lys-Gly) (interchain with G-Cter in SUMO2) cross-link involves residue Lys-102. Phosphoserine is present on Ser-105. The span at Asp-106 to Asp-118 shows a compositional bias: acidic residues. Ser-158 and Ser-216 each carry phosphoserine. Residues Lys-263 and Lys-291 each carry the N6-acetyllysine modification. The segment at Cys-279–Cys-303 adopts a C4-type zinc-finger fold.

It belongs to the eIF-2-beta/eIF-5 family. Eukaryotic translation initiation factor 2 eIF2 is a heterotrimeric complex composed of an alpha (EIF2S1), a beta (EIF2S2) and a gamma (EIF2S3) chain. eIF2 is member of the 43S pre-initiation complex (43S PIC). eIF2 forms a complex with at least CELF1/CUGBP1, CALR, CALR3, EIF2S1, EIF2S2, HSP90B1 and HSPA5. Interacts with BZW2/5MP1. Interacts with EIF5.

The protein localises to the cytoplasm. It localises to the cytosol. In terms of biological role, component of the eIF2 complex that functions in the early steps of protein synthesis by forming a ternary complex with GTP and initiator tRNA. This complex binds to a 40S ribosomal subunit, followed by mRNA binding to form the 43S pre-initiation complex (43S PIC). Junction of the 60S ribosomal subunit to form the 80S initiation complex is preceded by hydrolysis of the GTP bound to eIF2 and release of an eIF2-GDP binary complex. In order for eIF2 to recycle and catalyze another round of initiation, the GDP bound to eIF2 must exchange with GTP by way of a reaction catalyzed by eIF2B. In Mus musculus (Mouse), this protein is Eukaryotic translation initiation factor 2 subunit 2 (Eif2s2).